The following is a 455-amino-acid chain: Probable glycine dehydrogenase (decarboxylating) subunit 1 (455 aa).

This sequence belongs to the GcvP family. N-terminal subunit subfamily. In terms of assembly, the glycine cleavage system is composed of four proteins: P, T, L and H. In this organism, the P 'protein' is a heterodimer of two subunits.

The enzyme catalyses N(6)-[(R)-lipoyl]-L-lysyl-[glycine-cleavage complex H protein] + glycine + H(+) = N(6)-[(R)-S(8)-aminomethyldihydrolipoyl]-L-lysyl-[glycine-cleavage complex H protein] + CO2. Functionally, the glycine cleavage system catalyzes the degradation of glycine. The P protein binds the alpha-amino group of glycine through its pyridoxal phosphate cofactor; CO(2) is released and the remaining methylamine moiety is then transferred to the lipoamide cofactor of the H protein. This chain is Probable glycine dehydrogenase (decarboxylating) subunit 1, found in Saccharolobus islandicus (strain Y.G.57.14 / Yellowstone #1) (Sulfolobus islandicus).